The primary structure comprises 174 residues: Disulfide bond formation protein B (174 aa).

The Cytoplasmic segment spans residues 1 to 14 (MLHIFYIYSKSRKF). A helical transmembrane segment spans residues 15–31 (WAILICSSISLISIALL). Residues 32 to 49 (NQFFFLLKPCILCIYQRC) lie on the Periplasmic side of the membrane. A disulfide bridge links C41 with C44. Residues 50 to 65 (SLFGITIAGLIALISP) traverse the membrane as a helical segment. Residues 66 to 72 (KTTLLRL) lie on the Cytoplasmic side of the membrane. Residues 73-90 (FSIFIWLYSAIKGLYFSN) traverse the membrane as a helical segment. Residues 91–146 (IHMQTTLHPSSSLTCDLFVSFPNWLPLNKWYPIIFDSKISNCYSYPQYLLYLEISQ) lie on the Periplasmic side of the membrane. C105 and C132 are oxidised to a cystine. The chain crosses the membrane as a helical span at residues 147 to 165 (WMLLFFLIYLIIAIFTIIS). Residues 166 to 174 (QCHNLFQKK) lie on the Cytoplasmic side of the membrane.

Belongs to the DsbB family.

Its subcellular location is the cell inner membrane. Required for disulfide bond formation in some periplasmic proteins. Acts by oxidizing the DsbA protein. The protein is Disulfide bond formation protein B of Blochmanniella floridana.